The following is a 234-amino-acid chain: Phosphoribosylaminoimidazole-succinocarboxamide synthase (234 aa).

It belongs to the SAICAR synthetase family.

It carries out the reaction 5-amino-1-(5-phospho-D-ribosyl)imidazole-4-carboxylate + L-aspartate + ATP = (2S)-2-[5-amino-1-(5-phospho-beta-D-ribosyl)imidazole-4-carboxamido]succinate + ADP + phosphate + 2 H(+). It participates in purine metabolism; IMP biosynthesis via de novo pathway; 5-amino-1-(5-phospho-D-ribosyl)imidazole-4-carboxamide from 5-amino-1-(5-phospho-D-ribosyl)imidazole-4-carboxylate: step 1/2. This Staphylococcus aureus (strain MRSA252) protein is Phosphoribosylaminoimidazole-succinocarboxamide synthase.